Reading from the N-terminus, the 132-residue chain is Small ribosomal subunit protein uS8 (132 aa).

This sequence belongs to the universal ribosomal protein uS8 family. In terms of assembly, part of the 30S ribosomal subunit. Contacts proteins S5 and S12.

One of the primary rRNA binding proteins, it binds directly to 16S rRNA central domain where it helps coordinate assembly of the platform of the 30S subunit. This Caulobacter vibrioides (strain ATCC 19089 / CIP 103742 / CB 15) (Caulobacter crescentus) protein is Small ribosomal subunit protein uS8.